A 1375-amino-acid polypeptide reads, in one-letter code: Capping protein, Arp2/3 and myosin-I linker protein 3 (1375 aa).

The segment at 124–151 (IRRGNADTPEGPRDTSPNSETSTSTTHS) is disordered. Low complexity predominate over residues 138–151 (TSPNSETSTSTTHS). LRR repeat units follow at residues 244–264 (SLEELVLDNAGLKTDFVQKLA), 274–295 (VLHALILSHNPIEDKGFLSLSQ), 303–323 (GLTKLCLAKTAISPRGLQALG), 335–357 (SLRYLDLSKNPGLLATDEANALY), 365–386 (ALVHLDLSGTDCAVDMLLGALL), 392–413 (HLTYLNLARNSCSHRKGREAPP), 424–444 (TLSHVNLSATRLPLEALRALL), 455–475 (DLHLDLSSCELRSAGAQALQE), 482–501 (CIGSLDLSDNGFDSDLLTLV), and 509–530 (SLKHLFLGKNFNVKAKTLEEIL). 2 disordered regions span residues 864–901 (RTLSDPPGGASQGQDPSSRGRGRNHDHEETDDELGTNI) and 969–1375 (KLRH…PGTD). Positions 981–997 (PRTTPPGPGRPSVPVPG) are enriched in pro residues. Over residues 1007 to 1022 (RLDEGLEDFFSRRVMD) the composition is skewed to basic and acidic residues. Over residues 1047–1062 (QKKRRRGLFHFRRPRS) the composition is skewed to basic residues. Positions 1078–1097 (LPPPPPPPPTQESPPSPDPP) are enriched in pro residues. The span at 1098–1108 (SLGNNSSPCWS) shows a compositional bias: low complexity. Basic and acidic residues predominate over residues 1219 to 1229 (RRAEATWHIAE). The span at 1233–1244 (ANHSCQSPSPAS) shows a compositional bias: polar residues. Pro residues predominate over residues 1272–1281 (PIGPRPPKPV). Residues 1348-1360 (QSCDKLEPDRRQP) show a composition bias toward basic and acidic residues.

This sequence belongs to the CARMIL family.

The protein localises to the cytoplasm. Its subcellular location is the cell membrane. This Mus musculus (Mouse) protein is Capping protein, Arp2/3 and myosin-I linker protein 3 (Carmil3).